Consider the following 107-residue polypeptide: Anti-adapter protein IraM (107 aa).

The protein belongs to the IraM/RssC family.

It is found in the cytoplasm. In terms of biological role, inhibits RpoS proteolysis by regulating RssB activity, thereby increasing the stability of the sigma stress factor RpoS during magnesium starvation. In Escherichia coli O7:K1 (strain IAI39 / ExPEC), this protein is Anti-adapter protein IraM.